We begin with the raw amino-acid sequence, 606 residues long: Threonine dehydratase 1 biosynthetic, chloroplastic (606 aa).

Position 154 is an N6-(pyridoxal phosphate)lysine (K154). 2 consecutive ACT-like domains span residues 432 to 504 (AVLA…NLTD) and 526 to 597 (LLCR…MESL).

This sequence belongs to the serine/threonine dehydratase family. Requires pyridoxal 5'-phosphate as cofactor. In terms of tissue distribution, expressed constitutively in all tissues examined including root, stem, petiole, leaf, immature flower bud, unopened flower and opened flower with the highest expression in opened flower and lowest in leaf.

The protein resides in the plastid. It is found in the chloroplast. It catalyses the reaction L-threonine = 2-oxobutanoate + NH4(+). It participates in amino-acid biosynthesis; L-isoleucine biosynthesis; 2-oxobutanoate from L-threonine: step 1/1. With respect to regulation, strongly inhibited by 1 mM isoleucine. Functionally, has a housekeeping role in isoleucine biosynthesis. This is Threonine dehydratase 1 biosynthetic, chloroplastic from Solanum lycopersicum (Tomato).